Reading from the N-terminus, the 190-residue chain is MQKKFEDCVKTMLEIIGENPNREGLIKTPNRVFKTYEFLTSGYTQNVKEILNDALFESSNNEMVLVRDIEFYSLCEHHLLPFFGRAHVAYIPNKKVVGLSKIPRLVEVFARRLQIQEQLTEQIAQALMENVDAKGVGVVIEARHMCVEMRGVQKANSTTTTSALRGIFLKNEKTREEFFSLINSAKQVRF.

The Zn(2+) site is built by cysteine 75, histidine 78, and cysteine 146.

The protein belongs to the GTP cyclohydrolase I family. In terms of assembly, toroid-shaped homodecamer, composed of two pentamers of five dimers.

It carries out the reaction GTP + H2O = 7,8-dihydroneopterin 3'-triphosphate + formate + H(+). The protein operates within cofactor biosynthesis; 7,8-dihydroneopterin triphosphate biosynthesis; 7,8-dihydroneopterin triphosphate from GTP: step 1/1. This chain is GTP cyclohydrolase 1, found in Campylobacter jejuni subsp. jejuni serotype O:23/36 (strain 81-176).